The primary structure comprises 251 residues: Putative glutathione-independent glyoxalase hsp3105 (251 aa).

The protein belongs to the peptidase C56 family. HSP31-like subfamily.

It is found in the cytoplasm. It localises to the nucleus. The catalysed reaction is methylglyoxal + H2O = (R)-lactate + H(+). May catalyze the conversion of methylglyoxal (MG) to D-lactate in a single glutathione (GSH)-independent step. May play a role in detoxifying endogenously produced glyoxals. Involved in protection against reactive oxygen species (ROS). This is Putative glutathione-independent glyoxalase hsp3105 from Schizosaccharomyces pombe (strain 972 / ATCC 24843) (Fission yeast).